The sequence spans 257 residues: NAD-capped RNA hydrolase NudC (257 aa).

Substrate contacts are provided by Lys-25 and Arg-69. Zn(2+)-binding residues include Cys-98 and Cys-101. Substrate is bound at residue Glu-111. The Zn(2+) site is built by Cys-116 and Cys-119. Tyr-124 serves as a coordination point for substrate. The region spanning 125–248 (PQIAPCIIVA…TVARRLIEDT (124 aa)) is the Nudix hydrolase domain. A divalent metal cation contacts are provided by Ala-158, Glu-174, and Glu-178. Residues 159–180 (GFVEVGETLEQAVAREVMEESG) carry the Nudix box motif. Residue 192-199 (QPWPFPQS) participates in substrate binding. Glu-219 lines the a divalent metal cation pocket. A substrate-binding site is contributed by Ala-241.

This sequence belongs to the Nudix hydrolase family. NudC subfamily. Homodimer. The cofactor is Mg(2+). Mn(2+) serves as cofactor. Zn(2+) is required as a cofactor.

It catalyses the reaction a 5'-end NAD(+)-phospho-ribonucleoside in mRNA + H2O = a 5'-end phospho-adenosine-phospho-ribonucleoside in mRNA + beta-nicotinamide D-ribonucleotide + 2 H(+). The enzyme catalyses NAD(+) + H2O = beta-nicotinamide D-ribonucleotide + AMP + 2 H(+). It carries out the reaction NADH + H2O = reduced beta-nicotinamide D-ribonucleotide + AMP + 2 H(+). In terms of biological role, mRNA decapping enzyme that specifically removes the nicotinamide adenine dinucleotide (NAD) cap from a subset of mRNAs by hydrolyzing the diphosphate linkage to produce nicotinamide mononucleotide (NMN) and 5' monophosphate mRNA. The NAD-cap is present at the 5'-end of some mRNAs and stabilizes RNA against 5'-processing. Has preference for mRNAs with a 5'-end purine. Catalyzes the hydrolysis of a broad range of dinucleotide pyrophosphates. The sequence is that of NAD-capped RNA hydrolase NudC from Shigella flexneri.